Here is a 358-residue protein sequence, read N- to C-terminus: Tribbles homolog 3 (358 aa).

Residues 1–54 (MRATPLAAPAGSLSRKKRLELDDNLDTERPVQKRARSGPQPRLPPCLLPLSPPT) form a disordered region. The interval 1–127 (MRATPLAAPA…KHVARPTEVL (127 aa)) is interaction with DDIT3/CHOP. Serine 12 carries the phosphoserine modification. Pro residues predominate over residues 41 to 54 (PRLPPCLLPLSPPT). Residues 68–316 (LGPYVLLEPE…TGILLHPWLR (249 aa)) form the Protein kinase domain.

Belongs to the protein kinase superfamily. CAMK Ser/Thr protein kinase family. Tribbles subfamily. In terms of assembly, interacts with AKT1, AKT2, MAP2K1 and MAP2K7. Interacts with ATF4. Interacts with DDIT3/CHOP and inhibits its interaction with EP300/P300. Interacts with APOBEC3C. Interacts (via N-terminus) with APOBEC3A. Interacts with RELA. In terms of tissue distribution, highest expression in liver, pancreas, peripheral blood leukocytes and bone marrow. Also highly expressed in a number of primary lung, colon and breast tumors. Expressed in spleen, thymus, and prostate and is undetectable in other examined tissues, including testis, ovary, small intestine, colon, leukocyte, heart, brain, placenta, lung, skeletal muscle, and kidney.

It is found in the nucleus. Its function is as follows. Inactive protein kinase which acts as a regulator of the integrated stress response (ISR), a process for adaptation to various stress. Inhibits the transcriptional activity of DDIT3/CHOP and is involved in DDIT3/CHOP-dependent cell death during ER stress. May play a role in programmed neuronal cell death but does not appear to affect non-neuronal cells. Acts as a negative feedback regulator of the ATF4-dependent transcription during the ISR: while TRIB3 expression is promoted by ATF4, TRIB3 protein interacts with ATF4 and inhibits ATF4 transcription activity. Disrupts insulin signaling by binding directly to Akt kinases and blocking their activation. May bind directly to and mask the 'Thr-308' phosphorylation site in AKT1. Interacts with the NF-kappa-B transactivator p65 RELA and inhibits its phosphorylation and thus its transcriptional activation activity. Interacts with MAPK kinases and regulates activation of MAP kinases. Can inhibit APOBEC3A editing of nuclear DNA. This is Tribbles homolog 3 (TRIB3) from Homo sapiens (Human).